A 421-amino-acid chain; its full sequence is Testin (421 aa).

Residues 92 to 199 (MILTNPVAAK…GDVKLPRDMN (108 aa)) enclose the PET domain. Disordered stretches follow at residues 133-164 (EKQP…PSKC) and 193-213 (KLPR…GGDR). The segment covering 155–164 (PAHDQDPSKC) has biased composition (basic and acidic residues). LIM zinc-binding domains follow at residues 234–297 (YSCY…CDSE), 299–359 (PRCA…NHAV), and 362–421 (QGCH…KMMS).

Belongs to the prickle / espinas / testin family. Interacts via LIM domain 1 with ZYX. Interacts (via LIM domain 3) with ENAH and VASP. Interacts with ALKBH4, talin, actin, alpha-actinin, GRIP1 and PXN. Interacts (via LIM domain 2) with ACTL7A (via N-terminus). Heterodimer with ACTL7A; the heterodimer interacts with ENAH to form a heterotrimer.

The protein resides in the cytoplasm. It is found in the cell junction. It localises to the focal adhesion. Functionally, scaffold protein that may play a role in cell adhesion, cell spreading and in the reorganization of the actin cytoskeleton. Plays a role in the regulation of cell proliferation. May act as a tumor suppressor. This is Testin (TES) from Ovis aries (Sheep).